Reading from the N-terminus, the 292-residue chain is Formamidopyrimidine-DNA glycosylase (292 aa).

Residue proline 2 is the Schiff-base intermediate with DNA of the active site. Glutamate 3 functions as the Proton donor in the catalytic mechanism. The active-site Proton donor; for beta-elimination activity is lysine 60. Histidine 109, arginine 128, and arginine 173 together coordinate DNA. The segment at 258-292 adopts an FPG-type zinc-finger fold; sequence NVYRRTGRECRKCGNLIERQKITGRSTHWCPNCQK. Residue arginine 282 is the Proton donor; for delta-elimination activity of the active site.

Belongs to the FPG family. Monomer. Zn(2+) serves as cofactor.

It catalyses the reaction Hydrolysis of DNA containing ring-opened 7-methylguanine residues, releasing 2,6-diamino-4-hydroxy-5-(N-methyl)formamidopyrimidine.. It carries out the reaction 2'-deoxyribonucleotide-(2'-deoxyribose 5'-phosphate)-2'-deoxyribonucleotide-DNA = a 3'-end 2'-deoxyribonucleotide-(2,3-dehydro-2,3-deoxyribose 5'-phosphate)-DNA + a 5'-end 5'-phospho-2'-deoxyribonucleoside-DNA + H(+). Functionally, involved in base excision repair of DNA damaged by oxidation or by mutagenic agents. Acts as a DNA glycosylase that recognizes and removes damaged bases. Has a preference for oxidized purines, such as 7,8-dihydro-8-oxoguanine (8-oxoG). Has AP (apurinic/apyrimidinic) lyase activity and introduces nicks in the DNA strand. Cleaves the DNA backbone by beta-delta elimination to generate a single-strand break at the site of the removed base with both 3'- and 5'-phosphates. The protein is Formamidopyrimidine-DNA glycosylase of Prochlorococcus marinus (strain MIT 9301).